The chain runs to 1060 residues: Bumetanide-sensitive sodium-(potassium)-chloride cotransporter (1060 aa).

Over 1–122 the chain is Cytoplasmic; it reads MNDENRFNVS…KSPTPAVGIK (122 aa). 2 helical membrane-spanning segments follow: residues 123–143 and 154–174; these read LGWIQGVFIPCLLNIWGVMLF and GIGLSLVIIAISAIVCVITTL. The Cytoplasmic portion of the chain corresponds to 175 to 197; the sequence is SMSAICTNGEVKGGGIYYIISRS. Transmembrane regions (helical) follow at residues 198-218 and 250-270; these read LGPEFGASVGIIFAFANAVAA and IVGTVALLVMCIICAIGMDWE. The Cytoplasmic segment spans residues 271 to 275; the sequence is SKAQN. 2 helical membrane passes run 276–296 and 332–352; these read FLIAIIVGAMVDFVVGTIMGP and FFSVFAIFFPSVTGIQAGANI. Residues 353 to 367 lie on the Cytoplasmic side of the membrane; sequence SGDLKDPASAIPKGT. The helical transmembrane segment at 368–388 threads the bilayer; the sequence is LLALLISMVSYTLMVLFAGGG. N-linked (GlcNAc...) asparagine glycosylation is found at N396, N404, and N419. The chain crosses the membrane as a helical span at residues 432 to 452; that stretch reads VMQLMSAWGPFIYGGCWAATL. The Cytoplasmic portion of the chain corresponds to 453-497; it reads STALTNLLSVPRLIQALGVDRIYPGLIFFSKPYGRHGEPYRGYVL. The next 2 helical transmembrane spans lie at 498–518 and 563–583; these read TFFVSLLFLLIADLNTIAPLI and CVAIMLLVHWVMSLVTFAIFF. The Cytoplasmic portion of the chain corresponds to 584–642; sequence TLYLIVHYRRPDVNWGSSTQAQMYKTALSSAHALARTGEHVKNYWPQLLVLAGRPQARP. Residues 643–663 traverse the membrane as a helical segment; it reads ALVDLGNLISKAGSLMIVGDI. N-linked (GlcNAc...) asparagine glycosylation is present at N816. The helical transmembrane segment at 882 to 902 threads the bilayer; the sequence is TLDVWWLYDDGGLTILLPYII. Over 903–1060 the chain is Cytoplasmic; the sequence is SQRSAWANCK…NHTSVLTFYS (158 aa).

It belongs to the SLC12A transporter family.

Its subcellular location is the membrane. Its function is as follows. Electrically silent transporter system. Mediates sodium and chloride reabsorption. Plays a vital role in the regulation of ionic balance and cell volume. In Manduca sexta (Tobacco hawkmoth), this protein is Bumetanide-sensitive sodium-(potassium)-chloride cotransporter.